A 514-amino-acid polypeptide reads, in one-letter code: Transmembrane protein 117 (514 aa).

The Cytoplasmic portion of the chain corresponds to 1-15; the sequence is MGKDFRYYFQHPWSR. A helical transmembrane segment spans residues 16–36; sequence MIVAYLVIFFNFLIFAEDPVS. Residues 37–65 are Extracellular-facing; it reads HSQTEANVIVVGNCFSFVTNKYPRGVGWR. A helical transmembrane segment spans residues 66 to 86; the sequence is ILKVLLWLLAILIGLIAGKFL. Residues 87 to 110 lie on the Cytoplasmic side of the membrane; that stretch reads FHQRLFGQLLRLKMFREDHGSWMT. The helical transmembrane segment at 111–131 threads the bilayer; that stretch reads MFFSTILFLFIFSHIYNTILL. Topologically, residues 132 to 154 are extracellular; it reads MDGNMGAYLITDYMGIRNESFMK. Residues 155–175 traverse the membrane as a helical segment; sequence LAAVGTWMGDFVTAWMVTDMM. The Cytoplasmic portion of the chain corresponds to 176 to 198; the sequence is LQDKPYPDWGKSARAFWKKGNVR. The helical transmembrane segment at 199–219 threads the bilayer; that stretch reads IILFWTVLFTLTSVVVLVITT. The Extracellular portion of the chain corresponds to 220 to 239; sequence DWISWDKLNRGFLPSDEVSR. A helical membrane pass occupies residues 240 to 260; that stretch reads AFLASFILVFDLLIVMQDWEF. At 261-295 the chain is on the cytoplasmic side; sequence PHFMGDVDVNLPGLHTPHMQFKIPFFQKIFKEEYR. A helical transmembrane segment spans residues 296–316; the sequence is IHITGKWFNYGIIFLVLILDL. Residues 317 to 394 are Extracellular-facing; sequence NMWKNQIFYK…FIGASLDVKC (78 aa). N-linked (GlcNAc...) asparagine glycosylation is found at asparagine 353 and asparagine 371. A helical transmembrane segment spans residues 395 to 415; that stretch reads LAFVPSLIAFVWFGFFIWFFG. Over 416–514 the chain is Cytoplasmic; it reads RFLKNEQGME…PAASQRMRTN (99 aa). Residues 430-450 are disordered; sequence TYTRMKRKSPSEHSKDMGITR. Residues 438-448 show a composition bias toward basic and acidic residues; it reads SPSEHSKDMGI. Position 453 is a phosphothreonine (threonine 453). Residues 494–514 are disordered; that stretch reads ESTSEVEAEQEPAASQRMRTN.

Belongs to the TMEM117 family.

It is found in the cell membrane. In terms of biological role, involved in endoplasmic reticulum (ER) stress-induced cell death pathway. This is Transmembrane protein 117 (Tmem117) from Mus musculus (Mouse).